Reading from the N-terminus, the 375-residue chain is Pulmonary surfactant-associated protein D (375 aa).

The signal sequence occupies residues 1 to 21; sequence MLLFLLSALVLLTQSLGYLEA. S-nitrosocysteine occurs at positions 35 and 40. The tract at residues 43–221 is disordered; that stretch reads VESGLPGRDG…DKGAKGESGL (179 aa). The Collagen-like domain occupies 46-222; that stretch reads GLPGRDGRDG…KGAKGESGLP (177 aa). Over residues 50 to 65 the composition is skewed to basic and acidic residues; it reads RDGRDGREGPRGEKGD. Position 78 is a 4-hydroxyproline (P78). K87 is subject to 5-hydroxylysine. N90 carries N-linked (GlcNAc...) asparagine glycosylation. P96 carries the post-translational modification 4-hydroxyproline. A 5-hydroxylysine modification is found at K99. Pro residues predominate over residues 105 to 114; sequence SGPPGPPGVP. Composition is skewed to low complexity over residues 116-132 and 138-150; these read PAGREGPLGKQGNIGPQ and KGEAGPKGEVGAP. 4-hydroxyproline is present on residues P171 and P177. Residues 173–189 show a composition bias toward low complexity; it reads ERGAPGNAGAAGSAGVM. Basic and acidic residues predominate over residues 204-216; sequence KGDKGVPGDKGAK. Residues 223–251 adopt a coiled-coil conformation; sequence DVASLRQQVEALQKQVQHLQAAFSQYKKV. Residues 260 to 374 enclose the C-type lectin domain; that stretch reads VGEKIFKTAG…CGEKRLVVCE (115 aa). Disulfide bonds link C281/C373 and C351/C365.

Belongs to the SFTPD family. Oligomeric complex of 4 set of homotrimers. In terms of processing, hydroxylation on proline residues within the sequence motif, GXPG, is most likely to be 4-hydroxy as this fits the requirement for 4-hydroxylation in vertebrates. S-nitrosylation at Cys-35 and Cys-40 alters the quaternary structure which results in a pro-inflammatory chemoattractive signaling activity with macrophages.

It localises to the secreted. It is found in the extracellular space. The protein resides in the extracellular matrix. Its subcellular location is the surface film. In terms of biological role, contributes to the lung's defense against inhaled microorganisms, organic antigens and toxins. Interacts with compounds such as bacterial lipopolysaccharides, oligosaccharides and fatty acids and modulates leukocyte action in immune response. May participate in the extracellular reorganization or turnover of pulmonary surfactant. Binds strongly maltose residues and to a lesser extent other alpha-glucosyl moieties. The protein is Pulmonary surfactant-associated protein D (SFTPD) of Macaca mulatta (Rhesus macaque).